The following is a 481-amino-acid chain: Eukaryotic translation initiation factor 3 subunit L (481 aa).

The segment at 1–22 (MSVDARTAYPGSRPPANMQDES) is disordered. The 196-residue stretch at 262–457 (DAIRTFSHIL…DLDYAIEGNL (196 aa)) folds into the PCI domain.

Belongs to the eIF-3 subunit L family. In terms of assembly, component of the eukaryotic translation initiation factor 3 (eIF-3) complex.

The protein localises to the cytoplasm. Its function is as follows. Component of the eukaryotic translation initiation factor 3 (eIF-3) complex, which is involved in protein synthesis of a specialized repertoire of mRNAs and, together with other initiation factors, stimulates binding of mRNA and methionyl-tRNAi to the 40S ribosome. The eIF-3 complex specifically targets and initiates translation of a subset of mRNAs involved in cell proliferation. This Coccidioides immitis (strain RS) (Valley fever fungus) protein is Eukaryotic translation initiation factor 3 subunit L.